Here is a 104-residue protein sequence, read N- to C-terminus: Large ribosomal subunit protein uL23 (104 aa).

Belongs to the universal ribosomal protein uL23 family. As to quaternary structure, part of the 50S ribosomal subunit. Contacts protein L29, and trigger factor when it is bound to the ribosome.

Its function is as follows. One of the early assembly proteins it binds 23S rRNA. One of the proteins that surrounds the polypeptide exit tunnel on the outside of the ribosome. Forms the main docking site for trigger factor binding to the ribosome. The sequence is that of Large ribosomal subunit protein uL23 from Burkholderia multivorans (strain ATCC 17616 / 249).